The following is a 231-amino-acid chain: uncharacterized protein (231 aa).

The next 5 helical transmembrane spans lie at 36–56 (SLLA…SFFI), 58–78 (SQVT…ALQW), 83–103 (APLN…TLTP), 143–163 (FTVM…ASLL), and 170–190 (SIVN…YILY).

It belongs to the BI1 family.

The protein localises to the cell membrane. This is an uncharacterized protein from Campylobacter jejuni subsp. jejuni serotype O:2 (strain ATCC 700819 / NCTC 11168).